A 196-amino-acid chain; its full sequence is Pyridoxal 5'-phosphate synthase subunit PdxT (196 aa).

47–49 (GES) provides a ligand contact to L-glutamine. Cysteine 79 functions as the Nucleophile in the catalytic mechanism. L-glutamine-binding positions include arginine 106 and 134-135 (IR). Active-site charge relay system residues include histidine 170 and glutamate 172.

Belongs to the glutaminase PdxT/SNO family. In the presence of PdxS, forms a dodecamer of heterodimers. Only shows activity in the heterodimer.

It catalyses the reaction aldehydo-D-ribose 5-phosphate + D-glyceraldehyde 3-phosphate + L-glutamine = pyridoxal 5'-phosphate + L-glutamate + phosphate + 3 H2O + H(+). The catalysed reaction is L-glutamine + H2O = L-glutamate + NH4(+). It functions in the pathway cofactor biosynthesis; pyridoxal 5'-phosphate biosynthesis. Functionally, catalyzes the hydrolysis of glutamine to glutamate and ammonia as part of the biosynthesis of pyridoxal 5'-phosphate. The resulting ammonia molecule is channeled to the active site of PdxS. This chain is Pyridoxal 5'-phosphate synthase subunit PdxT, found in Bacillus velezensis (strain DSM 23117 / BGSC 10A6 / LMG 26770 / FZB42) (Bacillus amyloliquefaciens subsp. plantarum).